Reading from the N-terminus, the 364-residue chain is Chorismate synthase (364 aa).

The segment at 41 to 60 is disordered; sequence MQHDLDRRRPGTSRYTTARR. 2 residues coordinate NADP(+): arginine 48 and arginine 54. FMN-binding positions include 125–127, 238–239, glycine 278, 293–297, and arginine 319; these read RSS, NA, and KPTSS.

This sequence belongs to the chorismate synthase family. As to quaternary structure, homotetramer. The cofactor is FMNH2.

The catalysed reaction is 5-O-(1-carboxyvinyl)-3-phosphoshikimate = chorismate + phosphate. Its pathway is metabolic intermediate biosynthesis; chorismate biosynthesis; chorismate from D-erythrose 4-phosphate and phosphoenolpyruvate: step 7/7. Functionally, catalyzes the anti-1,4-elimination of the C-3 phosphate and the C-6 proR hydrogen from 5-enolpyruvylshikimate-3-phosphate (EPSP) to yield chorismate, which is the branch point compound that serves as the starting substrate for the three terminal pathways of aromatic amino acid biosynthesis. This reaction introduces a second double bond into the aromatic ring system. The sequence is that of Chorismate synthase from Shewanella baltica (strain OS223).